The primary structure comprises 325 residues: Putative HTH-type transcriptional regulatory protein MK1005 (325 aa).

The HTH cro/C1-type domain occupies 128-190 (VDELDVSRVR…FERRVAELLE (63 aa)). Positions 139–158 (RQLRREGGRITLARAEEADV) form a DNA-binding region, H-T-H motif.

The protein is Putative HTH-type transcriptional regulatory protein MK1005 of Methanopyrus kandleri (strain AV19 / DSM 6324 / JCM 9639 / NBRC 100938).